Consider the following 259-residue polypeptide: Phosphate import ATP-binding protein PstB (259 aa).

Positions 5–248 (IEVNDLNVYY…NIIFSNPSAQ (244 aa)) constitute an ABC transporter domain. Residue 37–44 (GPSGCGKS) participates in ATP binding.

The protein belongs to the ABC transporter superfamily. Phosphate importer (TC 3.A.1.7) family. In terms of assembly, the complex is composed of two ATP-binding proteins (PstB), two transmembrane proteins (PstC and PstA) and a solute-binding protein (PstS).

It localises to the cell membrane. The enzyme catalyses phosphate(out) + ATP + H2O = ADP + 2 phosphate(in) + H(+). Part of the ABC transporter complex PstSACB involved in phosphate import. Responsible for energy coupling to the transport system. The chain is Phosphate import ATP-binding protein PstB from Leifsonia xyli subsp. xyli (strain CTCB07).